Here is a 211-residue protein sequence, read N- to C-terminus: Large ribosomal subunit protein uL4 (211 aa).

A disordered region spans residues 42–87; sequence AHMRQGTASTLTRSEVRGGGRKPYKQKGTGRARQGSVRTPLRPGGG. Basic residues predominate over residues 60–71; the sequence is GGRKPYKQKGTG.

This sequence belongs to the universal ribosomal protein uL4 family. In terms of assembly, part of the 50S ribosomal subunit.

In terms of biological role, one of the primary rRNA binding proteins, this protein initially binds near the 5'-end of the 23S rRNA. It is important during the early stages of 50S assembly. It makes multiple contacts with different domains of the 23S rRNA in the assembled 50S subunit and ribosome. Functionally, forms part of the polypeptide exit tunnel. This Synechococcus sp. (strain CC9902) protein is Large ribosomal subunit protein uL4.